We begin with the raw amino-acid sequence, 141 residues long: MATIKVDVVSAEEQIFSGQAKFVALPGEAGELGILPGHTPLITRIRPGAVRIESENGEEEFVFVAGGILEVQPGAVTVLADTAIRGKDLDEAKAEQARKRAEEALQNTGSNLEYATAQAELAYATAQLAAIQRLRKLRGQH.

This sequence belongs to the ATPase epsilon chain family. In terms of assembly, F-type ATPases have 2 components, CF(1) - the catalytic core - and CF(0) - the membrane proton channel. CF(1) has five subunits: alpha(3), beta(3), gamma(1), delta(1), epsilon(1). CF(0) has three main subunits: a, b and c.

The protein resides in the cell inner membrane. In terms of biological role, produces ATP from ADP in the presence of a proton gradient across the membrane. This is ATP synthase epsilon chain from Paraburkholderia phymatum (strain DSM 17167 / CIP 108236 / LMG 21445 / STM815) (Burkholderia phymatum).